Here is a 278-residue protein sequence, read N- to C-terminus: Methyltransferase adrK (278 aa).

Residues 124–125 (DL), 151–152 (DV), and 152–153 (VL) contribute to the S-adenosyl-L-methionine site.

The protein belongs to the class I-like SAM-binding methyltransferase superfamily. Homodimer.

It functions in the pathway secondary metabolite biosynthesis; terpenoid biosynthesis. Functionally, methyltransferase; part of the gene cluster that mediates the biosynthesis of andrastins, meroterpenoid compounds that exhibit inhibitory activity against ras farnesyltransferase, suggesting that they could be promising leads for antitumor agents. The first step of the pathway is the synthesis of 3,5-dimethylorsellinic acid (DMOA) by the polyketide synthase adrD via condensation of one acetyl-CoA starter unit with 3 malonyl-CoA units and 2 methylations. DMAO is then converted to farnesyl-DMAO by the prenyltransferase adrG. The methyltransferase adrK catalyzes the methylation of the carboxyl group of farnesyl-DMAO to farnesyl-DMAO methyl ester which is further converted to epoxyfarnesyl-DMAO methyl ester by the FAD-dependent monooxygenase adrH. The terpene cyclase adrI then catalyzes the carbon skeletal rearrangement to generate the andrastin E, the first compound in the pathway having the andrastin scaffold, with the tetracyclic ring system. The post-cyclization tailoring enzymes adrF, adrE, adrJ, and adrA, are involved in the conversion of andrastin E into andrastin A. The short chain dehydrogenase adrF is responsible for the oxidation of the C-3 a hydroxyl group of andrastin E to yield the corresponding ketone, andrastin D. The ketoreductase adrE stereoselectively reduces the carbonyl moiety to reverse the stereochemistry of the C-3 position to yield andrastin F. The acetyltransferase adrJ is the acetyltransferase that attaches the acetyl group to the C-3 hydroxyl group of andrastin F to yield andrastin C. Finally, the cytochrome P450 monooxygenase adrA catalyzes two sequential oxidation reactions of the C-23 methyl group, to generate the corresponding alcohol andrastin B, and aldehyde andrastin A. The chain is Methyltransferase adrK from Penicillium roqueforti.